The chain runs to 897 residues: Schlafen family member 13 (897 aa).

The segment at 2-355 (EANHCSLGVY…WVEKMMDADP (354 aa)) is n'-domain region. Active-site residues include E208 and E213. The Zn(2+) site is built by H284, C286, and C321. An ATP-binding site is contributed by 599–606 (GLPGSGKT).

Belongs to the Schlafen family. Subgroup III subfamily. Mg(2+) serves as cofactor.

It is found in the cytoplasm. Endoribonuclease that cleaves tRNAs and rRNAs. Cleaves tRNAs 11 nucleotides from the 3'-terminus at the acceptor stem. Does not act on tRNA(Sec). Able to restrict HIV-1 virus replication; ability to inhibit HIV-1 replication is dependent on endoribonuclease activity. The sequence is that of Schlafen family member 13 from Homo sapiens (Human).